Here is a 200-residue protein sequence, read N- to C-terminus: Ras-related protein Rab-10 (200 aa).

11 residues coordinate GTP: S18, G19, V20, G21, K22, T23, C24, N35, T36, S40, and T41. T23 provides a ligand contact to Mg(2+). Short sequence motifs (switch) lie at residues 32–46 and 64–81; these read DAFNTTFISTIEIDF and DTAGQERFHTITTSYYRG. The Mg(2+) site is built by T41 and D64. Position 67 (G67) interacts with GTP. T73 is subject to Phosphothreonine. Position 102 is an N6-acetyllysine (K102). A Glycyl lysine isopeptide (Lys-Gly) (interchain with G-Cter in ubiquitin) cross-link involves residue K102. N122, K123, D125, and M126 together coordinate GTP. K136 participates in a covalent cross-link: Glycyl lysine isopeptide (Lys-Gly) (interchain with G-Cter in ubiquitin). Residues S152, A153, and K154 each coordinate GTP. K154 is covalently cross-linked (Glycyl lysine isopeptide (Lys-Gly) (interchain with G-Cter in ubiquitin)). 2 S-geranylgeranyl cysteine lipidation sites follow: C199 and C200.

This sequence belongs to the small GTPase superfamily. Rab family. Interacts with MYO5A; mediates the transport to the plasma membrane of SLC2A4/GLUT4 storage vesicles. Interacts with GDI1 and with GDI2; negatively regulates RAB10 association with membranes and activation. Interacts (GDP-bound form) with LLGL1; the interaction is direct and promotes RAB10 association with membranes and activation through competition with the Rab inhibitor GDI1. Interacts with EXOC4; probably associates with the exocyst. Interacts (GTP-bound form) with MICALCL, MICAL1, MICAL3, EHBP1 and EHBP1L1; at least in case of MICAL1 two molecules of RAB10 can bind to one molecule of MICAL1. Interacts with TBC1D13. Interacts with SEC16A. Interacts with CHM. Interacts with LRRK2; interaction facilitates phosphorylation of Thr-73. Interacts with RILPL1 and RILPL2 when phosphorylated on Thr-73. Interacts with TBC1D21. Interacts with MARCKS. It depends on Mg(2+) as a cofactor. Post-translationally, phosphorylation of Thr-73 in the switch II region by LRRK2 prevents the association of RAB regulatory proteins, including CHM and RAB GDP dissociation inhibitors GDI1 and GDI2. Phosphorylation of Thr-73 by LRRK2 is stimulated by RAB29 and RAB32. Phosphorylation by LRRK2 is required for localization to stressed lysosomes. In terms of tissue distribution, highest levels in neural and muscle tissues.

The protein localises to the cytoplasmic vesicle membrane. It localises to the golgi apparatus. The protein resides in the trans-Golgi network membrane. It is found in the endosome membrane. Its subcellular location is the recycling endosome membrane. The protein localises to the cytoplasmic vesicle. It localises to the phagosome membrane. The protein resides in the cell projection. It is found in the cilium. Its subcellular location is the endoplasmic reticulum membrane. The protein localises to the cytoplasm. It localises to the perinuclear region. The protein resides in the lysosome. The enzyme catalyses GTP + H2O = GDP + phosphate + H(+). With respect to regulation, regulated by guanine nucleotide exchange factors (GEFs) DENND4C and RABIF which promote the exchange of bound GDP for free GTP. Regulated by GTPase activating proteins (GAPs) including TBC1D21 which increase the GTP hydrolysis activity. Inhibited by GDP dissociation inhibitors GDI1 and GDI2 which prevent Rab-GDP dissociation. Its function is as follows. The small GTPases Rab are key regulators of intracellular membrane trafficking, from the formation of transport vesicles to their fusion with membranes. Rabs cycle between an inactive GDP-bound form and an active GTP-bound form that is able to recruit to membranes different set of downstream effectors directly responsible for vesicle formation, movement, tethering and fusion. That Rab is mainly involved in the biosynthetic transport of proteins from the Golgi to the plasma membrane. Regulates, for instance, SLC2A4/GLUT4 glucose transporter-enriched vesicles delivery to the plasma membrane. In parallel, it regulates the transport of TLR4, a toll-like receptor to the plasma membrane and therefore may be important for innate immune response. Also plays a specific role in asymmetric protein transport to the plasma membrane. In neurons, it is involved in axonogenesis through regulation of vesicular membrane trafficking toward the axonal plasma membrane. In epithelial cells, it regulates transport from the Golgi to the basolateral membrane. May play a role in the basolateral recycling pathway and in phagosome maturation. May play a role in endoplasmic reticulum dynamics and morphology controlling tubulation along microtubules and tubules fusion. Together with LRRK2, RAB8A, and RILPL1, it regulates ciliogenesis. When phosphorylated by LRRK2 on Thr-73, it binds RILPL1 and inhibits ciliogenesis. Participates in the export of a subset of neosynthesized proteins through a Rab8-Rab10-Rab11-dependent endososomal export route. Targeted to and stabilized on stressed lysosomes through LRRK2 phosphorylation where it promotes the extracellular release of lysosomal content through EHBP1 and EHNP1L1 effector proteins. This is Ras-related protein Rab-10 from Rattus norvegicus (Rat).